The sequence spans 261 residues: Putative hydro-lyase SAR11_0660 (261 aa).

This sequence belongs to the D-glutamate cyclase family.

This chain is Putative hydro-lyase SAR11_0660, found in Pelagibacter ubique (strain HTCC1062).